Reading from the N-terminus, the 361-residue chain is UDP-N-acetylglucosamine--N-acetylmuramyl-(pentapeptide) pyrophosphoryl-undecaprenol N-acetylglucosamine transferase (361 aa).

UDP-N-acetyl-alpha-D-glucosamine is bound by residues T21 to G23, N131, R172, S195, I250, and Q295.

It belongs to the glycosyltransferase 28 family. MurG subfamily.

It localises to the cell inner membrane. It carries out the reaction di-trans,octa-cis-undecaprenyl diphospho-N-acetyl-alpha-D-muramoyl-L-alanyl-D-glutamyl-meso-2,6-diaminopimeloyl-D-alanyl-D-alanine + UDP-N-acetyl-alpha-D-glucosamine = di-trans,octa-cis-undecaprenyl diphospho-[N-acetyl-alpha-D-glucosaminyl-(1-&gt;4)]-N-acetyl-alpha-D-muramoyl-L-alanyl-D-glutamyl-meso-2,6-diaminopimeloyl-D-alanyl-D-alanine + UDP + H(+). Its pathway is cell wall biogenesis; peptidoglycan biosynthesis. Cell wall formation. Catalyzes the transfer of a GlcNAc subunit on undecaprenyl-pyrophosphoryl-MurNAc-pentapeptide (lipid intermediate I) to form undecaprenyl-pyrophosphoryl-MurNAc-(pentapeptide)GlcNAc (lipid intermediate II). This Solibacter usitatus (strain Ellin6076) protein is UDP-N-acetylglucosamine--N-acetylmuramyl-(pentapeptide) pyrophosphoryl-undecaprenol N-acetylglucosamine transferase.